Here is a 241-residue protein sequence, read N- to C-terminus: Enterotoxin type H (241 aa).

The N-terminal stretch at 1–24 (MINKIKILFSFLALLLSFTSYAKA) is a signal peptide. Cys-106 and Cys-116 form a disulfide bridge. Positions 191, 230, and 232 each coordinate Zn(2+).

The protein belongs to the staphylococcal/streptococcal toxin family. As to quaternary structure, interacts with host MHC class II molecules composed of alpha/HLA-DRA and beta/HLA-DRB1 chains. Interacts with host TCR alpha-chain TRAV27. The cofactor is Zn(2+).

Its subcellular location is the secreted. Functionally, staphylococcal enterotoxin that activates the host immune system by binding as unprocessed molecules to major histocompatibility (MHC) complex class II and T-cell receptor (TCR) molecules via their alpha domain, in particular TRAV27. In turn, this ternary complex activates a large number of T-lymphocytes initiating a systemic release of pro-inflammatory cytokines. Also causes the intoxication staphylococcal food poisoning syndrome. The illness characterized by high fever, hypotension, diarrhea, shock, and in some cases death. The polypeptide is Enterotoxin type H (entH) (Staphylococcus aureus).